The sequence spans 244 residues: Putative ABC transporter ATP-binding protein gll0289 (244 aa).

Residues 5–237 (LVVEELHYSY…RVLLETHGLE (233 aa)) enclose the ABC transporter domain. 38–45 (GPNGSGKS) serves as a coordination point for ATP.

Belongs to the ABC transporter superfamily.

It is found in the cell inner membrane. Functionally, probably part of an ABC transporter complex. Responsible for energy coupling to the transport system. This is Putative ABC transporter ATP-binding protein gll0289 from Gloeobacter violaceus (strain ATCC 29082 / PCC 7421).